The chain runs to 251 residues: tRNA pseudouridine synthase A (251 aa).

D26 serves as the catalytic Nucleophile. Y98 provides a ligand contact to substrate.

Belongs to the tRNA pseudouridine synthase TruA family. As to quaternary structure, homodimer.

The enzyme catalyses uridine(38/39/40) in tRNA = pseudouridine(38/39/40) in tRNA. Formation of pseudouridine at positions 38, 39 and 40 in the anticodon stem and loop of transfer RNAs. The protein is tRNA pseudouridine synthase A of Mycolicibacterium paratuberculosis (strain ATCC BAA-968 / K-10) (Mycobacterium paratuberculosis).